Consider the following 453-residue polypeptide: Phosphoglucosamine mutase (453 aa).

Ser-100 acts as the Phosphoserine intermediate in catalysis. The Mg(2+) site is built by Ser-100, Asp-239, Asp-241, and Asp-243. Ser-100 is modified (phosphoserine).

It belongs to the phosphohexose mutase family. The cofactor is Mg(2+). Post-translationally, activated by phosphorylation.

It catalyses the reaction alpha-D-glucosamine 1-phosphate = D-glucosamine 6-phosphate. In terms of biological role, catalyzes the conversion of glucosamine-6-phosphate to glucosamine-1-phosphate. The polypeptide is Phosphoglucosamine mutase (Buchnera aphidicola subsp. Baizongia pistaciae (strain Bp)).